The following is a 436-amino-acid chain: Hydrogenobyrinate a,c-diamide synthase (436 aa).

In terms of domain architecture, GATase cobBQ-type spans 244 to 435; it reads RIAVARDDAF…MHVIDFSGEA (192 aa). Cys327 serves as the catalytic Nucleophile.

The protein belongs to the CobB/CbiA family. Mg(2+) is required as a cofactor.

The catalysed reaction is hydrogenobyrinate + 2 L-glutamine + 2 ATP + 2 H2O = hydrogenobyrinate a,c-diamide + 2 L-glutamate + 2 ADP + 2 phosphate + 2 H(+). Its pathway is cofactor biosynthesis; adenosylcobalamin biosynthesis; cob(II)yrinate a,c-diamide from precorrin-2 (aerobic route): step 9/10. In terms of biological role, catalyzes the ATP-dependent amidation of the two carboxylate groups at positions a and c of hydrogenobyrinate, using either L-glutamine or ammonia as the nitrogen source. The protein is Hydrogenobyrinate a,c-diamide synthase of Brucella abortus biovar 1 (strain 9-941).